A 267-amino-acid chain; its full sequence is Interleukin-1 beta (267 aa).

Positions 1–114 (MAIVPEPAKE…ETCNDDFVCD (114 aa)) are excised as a propeptide.

Belongs to the IL-1 family. (Microbial infection) Interacts with African swine fever virus (ASFV) protein L83L. As to quaternary structure, monomer. In its precursor form, weakly interacts with full-length MEFV; the mature cytokine does not interact at all. Interacts with integrins ITGAV:ITGBV and ITGA5:ITGB1; integrin-binding is required for IL1B signaling. Interacts with cargo receptor TMED10; the interaction is direct and is required for the secretion of IL1B mature form. Interacts with HSP90AB1; the interaction facilitates cargo translocation into the ERGIC. Interacts with HSP90B1; the interaction facilitates cargo translocation into the ERGIC.

The protein localises to the cytoplasm. Its subcellular location is the cytosol. It localises to the secreted. The protein resides in the lysosome. It is found in the extracellular exosome. Its function is as follows. Potent pro-inflammatory cytokine. Initially discovered as the major endogenous pyrogen, induces prostaglandin synthesis, neutrophil influx and activation, T-cell activation and cytokine production, B-cell activation and antibody production, and fibroblast proliferation and collagen production. Promotes Th17 differentiation of T-cells. Synergizes with IL12/interleukin-12 to induce IFNG synthesis from T-helper 1 (Th1) cells. Plays a role in angiogenesis by inducing VEGF production synergistically with TNF and IL6. Involved in transduction of inflammation downstream of pyroptosis: its mature form is specifically released in the extracellular milieu by passing through the gasdermin-D (GSDMD) pore. This Sus scrofa (Pig) protein is Interleukin-1 beta (IL1B).